The sequence spans 226 residues: Ribonuclease 3 (226 aa).

In terms of domain architecture, RNase III spans D7–G129. E42 contacts Mg(2+). Residue D46 is part of the active site. Residues D115 and E118 each coordinate Mg(2+). Residue E118 is part of the active site. One can recognise a DRBM domain in the interval D156 to R226.

The protein belongs to the ribonuclease III family. In terms of assembly, homodimer. It depends on Mg(2+) as a cofactor.

It localises to the cytoplasm. It catalyses the reaction Endonucleolytic cleavage to 5'-phosphomonoester.. Its function is as follows. Digests double-stranded RNA. Involved in the processing of primary rRNA transcript to yield the immediate precursors to the large and small rRNAs (23S and 16S). Processes some mRNAs, and tRNAs when they are encoded in the rRNA operon. Processes pre-crRNA and tracrRNA of type II CRISPR loci if present in the organism. The polypeptide is Ribonuclease 3 (Thiobacillus denitrificans (strain ATCC 25259 / T1)).